The sequence spans 228 residues: Acyl-protein thioesterase 1 (228 aa).

Catalysis depends on charge relay system residues Ser119, Asp174, and His208.

This sequence belongs to the AB hydrolase superfamily. AB hydrolase 2 family.

Its subcellular location is the cytoplasm. It is found in the nucleus. The enzyme catalyses S-hexadecanoyl-L-cysteinyl-[protein] + H2O = L-cysteinyl-[protein] + hexadecanoate + H(+). Its function is as follows. Hydrolyzes fatty acids from S-acylated cysteine residues in proteins with a strong preference for palmitoylated G-alpha proteins over other acyl substrates. Mediates the deacylation of G-alpha proteins such as GPA1 in vivo, but has weak or no activity toward palmitoylated Ras proteins. Has weak lysophospholipase activity in vitro; however such activity may not exist in vivo. The protein is Acyl-protein thioesterase 1 of Kluyveromyces lactis (strain ATCC 8585 / CBS 2359 / DSM 70799 / NBRC 1267 / NRRL Y-1140 / WM37) (Yeast).